We begin with the raw amino-acid sequence, 304 residues long: HPr kinase/phosphorylase (304 aa).

Catalysis depends on residues His-136 and Lys-157. Position 151–158 (151–158) interacts with ATP; the sequence is GESGIGKS. Residue Ser-158 participates in Mg(2+) binding. Asp-175 acts as the Proton acceptor; for phosphorylation activity. Proton donor; for dephosphorylation activity in catalysis. The interval 198–207 is important for the catalytic mechanism of both phosphorylation and dephosphorylation; sequence LEVRGMGIID. Position 199 (Glu-199) interacts with Mg(2+). Arg-240 is an active-site residue. The important for the catalytic mechanism of dephosphorylation stretch occupies residues 261–266; sequence PIRPGR.

The protein belongs to the HPrK/P family. In terms of assembly, homohexamer. It depends on Mg(2+) as a cofactor.

The catalysed reaction is [HPr protein]-L-serine + ATP = [HPr protein]-O-phospho-L-serine + ADP + H(+). It carries out the reaction [HPr protein]-O-phospho-L-serine + phosphate + H(+) = [HPr protein]-L-serine + diphosphate. Catalyzes the ATP- as well as the pyrophosphate-dependent phosphorylation of a specific serine residue in HPr, a phosphocarrier protein of the phosphoenolpyruvate-dependent sugar phosphotransferase system (PTS). HprK/P also catalyzes the pyrophosphate-producing, inorganic phosphate-dependent dephosphorylation (phosphorolysis) of seryl-phosphorylated HPr (P-Ser-HPr). The two antagonistic activities of HprK/P are regulated by several intracellular metabolites, which change their concentration in response to the absence or presence of rapidly metabolisable carbon sources (glucose, fructose, etc.) in the growth medium. Therefore, by controlling the phosphorylation state of HPr, HPrK/P is a sensor enzyme that plays a major role in the regulation of carbon metabolism and sugar transport: it mediates carbon catabolite repression (CCR), and regulates PTS-catalyzed carbohydrate uptake and inducer exclusion. This chain is HPr kinase/phosphorylase, found in Clostridium acetobutylicum (strain ATCC 824 / DSM 792 / JCM 1419 / IAM 19013 / LMG 5710 / NBRC 13948 / NRRL B-527 / VKM B-1787 / 2291 / W).